Here is a 419-residue protein sequence, read N- to C-terminus: Aminoacyltransferase FemB (419 aa).

The protein belongs to the FemABX family. In terms of assembly, homodimer. Interacts with FemA.

Its subcellular location is the cytoplasm. It carries out the reaction MurNAc-L-Ala-D-isoglutaminyl-L-Lys-(N(6)-tri-Gly)-D-Ala-D-Ala-diphospho-di-trans,octa-cis-undecaprenyl-GlcNAc + 2 glycyl-tRNA(Gly) = MurNAc-L-Ala-D-isoglutaminyl-L-Lys-(N(6)-penta-Gly)-D-Ala-D-Ala-diphospho-di-trans,octa-cis-undecaprenyl-GlcNAc + 2 tRNA(Gly) + 2 H(+). In terms of biological role, catalyzes the formation of the pentaglycine interpeptide bridge, which is characteristic of the S.aureus peptidoglycan. Adds glycines 4 and 5 of the pentaglycine bridge, using glycyl-tRNA(Gly) as donor. Involved in resistance to methicillin. This chain is Aminoacyltransferase FemB (femB), found in Staphylococcus aureus (strain NCTC 8325 / PS 47).